Here is a 222-residue protein sequence, read N- to C-terminus: Capsular polysaccharide type 5 biosynthesis protein cap5A (222 aa).

The next 2 membrane-spanning stretches (helical) occupy residues Ile20 to Leu40 and Val172 to Phe192.

The protein belongs to the CpsC/CapA family.

The protein localises to the cell membrane. Its function is as follows. Required for the biosynthesis of type 5 capsular polysaccharide (Cap5/CP5). Might act as the chain-length regulator. The polypeptide is Capsular polysaccharide type 5 biosynthesis protein cap5A (cap5A) (Staphylococcus aureus (strain Newman)).